A 1162-amino-acid chain; its full sequence is MKRLRSSDDLDFCNDKNVDGEPPNSDRPASSSHRGFFSGNNRDRGEDAAGFSRAFSRRRSNRDLDNHRPDARYHRSESACFSRRAFPKGFRSERERPNRDASVSSWRRFGGPGNDFGVDDRDRRLRDAERDRSLKSPSWSRDSPNELSKFKPLDSRNSRSRSKSLASPTWSKDSGSEQSKSVGNVVKKSEEEVQGKSSTTSSEMEEGELEPEPQPETASGLAHQTKHDCKLPSCSADDHKNARIDRSFQEIGKSAQLDANTESNRELSHVGGNREMETTDSMTDKKSVEDAENVPEHATESMHVSQNNVNDTSTALAIEHDHRDGTITASANKITDTVDEKGDKDEDYKENLHGVKLEETLYPDVPERLEELKEVKGNDGDANKAEVEGPECVEENALANRTPAEYISSVSDSSVHKCKDKGKNSDVPLTHLVGNALFSESKTEDLHDKDKDEKDDNFGGPSIRGFELFSSSPVRRAKKTEQSGVNKHKDEKLLLEPLDLSLSLPDVLLPIGGQDTNQLGSPVRSGSVRSLTDTFCTNSDGFTMSMSFSGSRSFNHNPSCSLSHNIGDNEQSVHSRPIFQGIDWQALSHNDSKYNENTVYQRLMENGNGSVQPRAMKGNLISGQADEEHLRLPDGSSKAANILEKQLSFQKSVDVRSACPRTGSLENGSKFTVEKKTAKDFYSGSNSWITGLEAGGHDFVETVIRYILSDSMPVMTKRFHEMPTRNITSLKENIRQMMLNMDKNVQLGAFQDALQNRTDITLELLTKSHRAQLEILVALKSGRSDFLLLDNSISSSHLAEIFMNMRCKNLSCRVLLPVDECDCRVCSRKDGFCSACMCLVCSNFDMASNTCSWVGCDVCLHWCHTDCGIKESYIRNGINASGAPGMTEMQFHCVACNHPSEMFGFVKEVFLNFAREWKFERFCKELEYVNKIFSSSKDSRGKQLRQAADAMLASLKSKLIGLPEACNRILGFISDCDSSTPAETSAPFIYEQPKPRHERGSPSQDTAWLRSVCSDNPHNQLKRSASVADAFHRERQVEICAVEMELERGSPKEPRFEELESIVRMKQAEAEMFQGRADDARREAEGLKRIAIAKKEKIEEEYNRRMGKLSMEDAQERRRRRYEELEAMQRGQREFYEMKMRMEEEMRGLLTKMEMTKQSLAL.

4 stretches are compositionally biased toward basic and acidic residues: residues 1-19 (MKRLRSSDDLDFCNDKNVD), 61-77 (NRDLDNHRPDARYHRSE), 90-99 (FRSERERPNR), and 118-134 (VDDRDRRLRDAERDRSL). 4 disordered regions span residues 1–235 (MKRL…PSCS), 251–307 (IGKS…VSQN), 321–346 (DHRDGTITASANKITDTVDEKGDKDE), and 441–485 (SKTE…QSGV). A compositionally biased stretch (polar residues) spans 135–146 (KSPSWSRDSPNE). The span at 148–157 (SKFKPLDSRN) shows a compositional bias: basic and acidic residues. Residues 163–182 (KSLASPTWSKDSGSEQSKSV) show a composition bias toward polar residues. A compositionally biased stretch (acidic residues) spans 203-213 (EMEEGELEPEP). 4 stretches are compositionally biased toward basic and acidic residues: residues 225–235 (TKHDCKLPSCS), 263–300 (SNRELSHVGGNREMETTDSMTDKKSVEDAENVPEHATE), 336–346 (DTVDEKGDKDE), and 441–457 (SKTEDLHDKDKDEKDDN). Residues 835 to 899 (ACMCLVCSNF…QFHCVACNHP (65 aa)) form a PHD-type zinc finger. The stretch at 1065–1161 (MKQAEAEMFQ…KMEMTKQSLA (97 aa)) forms a coiled coil.

In terms of assembly, self-interacts. Interacts with OBE1 and OBE2. Interacts with OBE3.

Its subcellular location is the nucleus. Probable transcription factor that functions redundantly with OBE3 in specification of the hypophysis and establishment of the embryonic root. Involved in the activation of ARF5/MP-dependent gene expression during embryonic root meristem initiation. Involved in shoot meristem homeostasis. The sequence is that of Protein OBERON 4 from Arabidopsis thaliana (Mouse-ear cress).